A 151-amino-acid polypeptide reads, in one-letter code: Large ribosomal subunit protein bL9 (151 aa).

It belongs to the bacterial ribosomal protein bL9 family.

In terms of biological role, binds to the 23S rRNA. The polypeptide is Large ribosomal subunit protein bL9 (Desulfosudis oleivorans (strain DSM 6200 / JCM 39069 / Hxd3) (Desulfococcus oleovorans)).